Reading from the N-terminus, the 230-residue chain is MALYDRANSRNAYAEDSVLHESELVSFVKTTYKFFAGSLLLATVGALLGLMNFQAVVQYKWVFFIAEIVAFFGLMFSKSKPGLNLFMLFAFTSLSGVTLVPLLGMVIAKAGLGAVWQALGMTTIVFGLMSVYALKTKNDLANMGKMLFIALIVVVVCSLINLFLGSPMFQVVIAGASAILFSLYIAYDTQNIVKGMYDSPIDAAVSLYLDFLNVFISILQIIGIFSDRDK.

The next 7 membrane-spanning stretches (helical) occupy residues 34–54 (FFAG…MNFQ), 56–76 (VVQY…GLMF), 87–107 (MLFA…GMVI), 111–131 (GLGA…LMSV), 146–166 (MLFI…FLGS), 167–187 (PMFQ…YIAY), and 205–225 (VSLY…IGIF).

This sequence belongs to the BI1 family.

The protein resides in the cell membrane. This is an uncharacterized protein from Helicobacter pylori (strain J99 / ATCC 700824) (Campylobacter pylori J99).